Consider the following 405-residue polypeptide: Protochlorophyllide reductase A, chloroplastic (405 aa).

The N-terminal 69 residues, 1-69 (MALQAASLVS…LRNNKAIIRA (69 aa)), are a transit peptide targeting the chloroplast.

It belongs to the short-chain dehydrogenases/reductases (SDR) family. POR subfamily. Forms large complexes including TOC33, pPORA and OEP161 during pPORA import into plastids at the plastid envelope membrane. Interacts with CPP1 during plastid import. In terms of tissue distribution, expressed in young seedlings. Not detected in leaves.

It is found in the plastid. The protein resides in the chloroplast. The catalysed reaction is chlorophyllide a + NADP(+) = protochlorophyllide a + NADPH + H(+). It functions in the pathway porphyrin-containing compound metabolism; chlorophyll biosynthesis. Functionally, phototransformation of protochlorophyllide (Pchlide) to chlorophyllide (Chlide). PORA may also function as a photoprotectant during the transitory stage from dark to light. Functions in skotomorphogenesis, photomorphogenesis and throughout the plant life under specific light conditions. The protein is Protochlorophyllide reductase A, chloroplastic (PORA) of Arabidopsis thaliana (Mouse-ear cress).